We begin with the raw amino-acid sequence, 960 residues long: Endosome/lysosome-associated apoptosis and autophagy regulator family member 2 (960 aa).

Residues 1–26 are disordered; it reads MLFLRPGPARGRGRGRPARAPHSGLS. A signal peptide spans 1-44; it reads MLFLRPGPARGRGRGRPARAPHSGLSPPWSPAWICCWALAGCQA. Residues 45 to 860 are Extracellular-facing; that stretch reads AWAGAGDLPS…TCETVDFWLK (816 aa). An N-linked (GlcNAc...) asparagine glycan is attached at asparagine 171. 3 cysteine pairs are disulfide-bonded: cysteine 295–cysteine 312, cysteine 325–cysteine 348, and cysteine 328–cysteine 360. Residues asparagine 407 and asparagine 622 are each glycosylated (N-linked (GlcNAc...) asparagine). One can recognise an MRH domain in the interval 597–808; that stretch reads PTCPYIRSMA…LWESVEACPL (212 aa). 4 disulfides stabilise this stretch: cysteine 599/cysteine 651, cysteine 661/cysteine 689, cysteine 758/cysteine 794, and cysteine 770/cysteine 806. A helical transmembrane segment spans residues 861-881; the sequence is VGAGVGAFTAVLLVALTCYFW. Over 882–960 the chain is Cytoplasmic; the sequence is KKNQKLEYKY…QLKSSRSPNI (79 aa). Serine 949 bears the Phosphoserine mark.

This sequence belongs to the ELAPOR family.

The protein localises to the cell membrane. Functions as a regulator of the BMP signaling pathway and may be involved in epidermal differentiation. The chain is Endosome/lysosome-associated apoptosis and autophagy regulator family member 2 from Bos taurus (Bovine).